The following is a 244-amino-acid chain: 1-(5-phosphoribosyl)-5-[(5-phosphoribosylamino)methylideneamino] imidazole-4-carboxamide isomerase (244 aa).

Aspartate 7 functions as the Proton acceptor in the catalytic mechanism. Residue aspartate 129 is the Proton donor of the active site.

The protein belongs to the HisA/HisF family.

Its subcellular location is the cytoplasm. It carries out the reaction 1-(5-phospho-beta-D-ribosyl)-5-[(5-phospho-beta-D-ribosylamino)methylideneamino]imidazole-4-carboxamide = 5-[(5-phospho-1-deoxy-D-ribulos-1-ylimino)methylamino]-1-(5-phospho-beta-D-ribosyl)imidazole-4-carboxamide. It participates in amino-acid biosynthesis; L-histidine biosynthesis; L-histidine from 5-phospho-alpha-D-ribose 1-diphosphate: step 4/9. The polypeptide is 1-(5-phosphoribosyl)-5-[(5-phosphoribosylamino)methylideneamino] imidazole-4-carboxamide isomerase (Pseudoalteromonas atlantica (strain T6c / ATCC BAA-1087)).